Here is a 271-residue protein sequence, read N- to C-terminus: Chymotrypsin-like elastase family member 2A (271 aa).

The first 16 residues, 1–16, serve as a signal peptide directing secretion; it reads MIRTLLLSALVAGALS. The propeptide at 17-30 is activation peptide; sequence CGYPTYEVQHDVSR. One can recognise a Peptidase S1 domain in the interval 31–269; it reads VVGGQEASPN…YIDWINSVIA (239 aa). Cysteine 60 and cysteine 76 are oxidised to a cystine. Residues histidine 75 and aspartate 123 each act as charge relay system in the active site. 3 cysteine pairs are disulfide-bonded: cysteine 157–cysteine 224, cysteine 188–cysteine 204, and cysteine 214–cysteine 245. The Charge relay system role is filled by serine 218.

It belongs to the peptidase S1 family. Elastase subfamily. In terms of assembly, interacts with CPA1. Interacts with SERPINA1. Pancreas.

Its subcellular location is the secreted. It catalyses the reaction Preferential cleavage: Leu-|-Xaa, Met-|-Xaa and Phe-|-Xaa. Hydrolyzes elastin.. In terms of biological role, elastase that enhances insulin signaling and might have a physiologic role in cellular glucose metabolism. Circulates in plasma and reduces platelet hyperactivation, triggers both insulin secretion and degradation, and increases insulin sensitivity. The sequence is that of Chymotrypsin-like elastase family member 2A (Cela2a) from Rattus norvegicus (Rat).